Reading from the N-terminus, the 309-residue chain is Porphobilinogen deaminase (309 aa).

At cysteine 244 the chain carries S-(dipyrrolylmethanemethyl)cysteine.

This sequence belongs to the HMBS family. Monomer. The cofactor is dipyrromethane.

The enzyme catalyses 4 porphobilinogen + H2O = hydroxymethylbilane + 4 NH4(+). It participates in porphyrin-containing compound metabolism; protoporphyrin-IX biosynthesis; coproporphyrinogen-III from 5-aminolevulinate: step 2/4. Functionally, tetrapolymerization of the monopyrrole PBG into the hydroxymethylbilane pre-uroporphyrinogen in several discrete steps. The sequence is that of Porphobilinogen deaminase from Listeria welshimeri serovar 6b (strain ATCC 35897 / DSM 20650 / CCUG 15529 / CIP 8149 / NCTC 11857 / SLCC 5334 / V8).